A 613-amino-acid chain; its full sequence is DNA mismatch repair protein MutL (613 aa).

The disordered stretch occupies residues 364–393; it reads EPAVARQPEAPRYSSGASAPRPTGANYPHA.

It belongs to the DNA mismatch repair MutL/HexB family.

Functionally, this protein is involved in the repair of mismatches in DNA. It is required for dam-dependent methyl-directed DNA mismatch repair. May act as a 'molecular matchmaker', a protein that promotes the formation of a stable complex between two or more DNA-binding proteins in an ATP-dependent manner without itself being part of a final effector complex. The sequence is that of DNA mismatch repair protein MutL from Enterobacter sp. (strain 638).